We begin with the raw amino-acid sequence, 132 residues long: Small ribosomal subunit protein uS8 (132 aa).

The protein belongs to the universal ribosomal protein uS8 family. As to quaternary structure, part of the 30S ribosomal subunit. Contacts proteins S5 and S12.

One of the primary rRNA binding proteins, it binds directly to 16S rRNA central domain where it helps coordinate assembly of the platform of the 30S subunit. This is Small ribosomal subunit protein uS8 from Xylella fastidiosa (strain M12).